The following is a 452-amino-acid chain: Phosphoglucosamine mutase (452 aa).

S108 acts as the Phosphoserine intermediate in catalysis. Residues S108, D247, D249, and D251 each coordinate Mg(2+). S108 carries the post-translational modification Phosphoserine.

The protein belongs to the phosphohexose mutase family. The cofactor is Mg(2+). In terms of processing, activated by phosphorylation.

It carries out the reaction alpha-D-glucosamine 1-phosphate = D-glucosamine 6-phosphate. Its function is as follows. Catalyzes the conversion of glucosamine-6-phosphate to glucosamine-1-phosphate. This chain is Phosphoglucosamine mutase, found in Burkholderia pseudomallei (strain 668).